The following is a 97-amino-acid chain: Large ribosomal subunit protein eL30 (97 aa).

It belongs to the eukaryotic ribosomal protein eL30 family.

The polypeptide is Large ribosomal subunit protein eL30 (Methanoregula boonei (strain DSM 21154 / JCM 14090 / 6A8)).